The following is a 436-amino-acid chain: GDP-mannose 6-dehydrogenase (436 aa).

Tyr10, Val11, Asp30, Lys35, Thr86, and Thr124 together coordinate NAD(+). 10 residues coordinate GDP-alpha-D-mannuronate: Glu161, Lys210, Asn214, His217, Asn225, Tyr256, Tyr257, Arg259, Phe262, and Gly265. The Nucleophile role is filled by Cys268. Lys271 contributes to the NAD(+) binding site. The segment at 278-295 is inter-domain linker; sequence YRASQLDVEHPMLGSLMR. Lys324 provides a ligand contact to GDP-alpha-D-mannuronate. Arg331 is an NAD(+) binding site.

The protein belongs to the UDP-glucose/GDP-mannose dehydrogenase family. As to quaternary structure, forms a domain-swapped dimer with each peptide contributing to each active site. The dimers assemble further. X-ray structures indicate this enzyme exists as a homotetramer PubMed:12705829, but kinetic and physical results obtained in PubMed:2470755 and PubMed:12135385 indicate that it is probably a homohexamer.

The enzyme catalyses GDP-alpha-D-mannose + 2 NAD(+) + H2O = GDP-alpha-D-mannuronate + 2 NADH + 3 H(+). Its pathway is glycan biosynthesis; alginate biosynthesis. Inhibited by GMP, ATP, GDP-D-glucose and maltose. Inhibited by GMP and deamidoNAD. In terms of biological role, catalyzes the oxidation of guanosine diphospho-D-mannose (GDP-D-mannose) to GDP-D-mannuronic acid, a precursor for alginate polymerization. The alginate layer causes a mucoid phenotype and provides a protective barrier against host immune defenses and antibiotics. Other sugars are not used as substrates. This Pseudomonas aeruginosa (strain ATCC 15692 / DSM 22644 / CIP 104116 / JCM 14847 / LMG 12228 / 1C / PRS 101 / PAO1) protein is GDP-mannose 6-dehydrogenase.